Here is a 260-residue protein sequence, read N- to C-terminus: Adenosylcobinamide-GDP ribazoletransferase (260 aa).

The next 7 membrane-spanning stretches (helical) occupy residues 42 to 62 (PLAG…ANAI), 64 to 84 (LPPL…TGAL), 117 to 137 (FAAL…MAII), 144 to 164 (YALL…LAFW), 192 to 212 (GLGL…VALI), 214 to 234 (ALVL…AKIG), and 240 to 260 (TLGA…VMAL).

Belongs to the CobS family. The cofactor is Mg(2+).

It localises to the cell inner membrane. The enzyme catalyses alpha-ribazole + adenosylcob(III)inamide-GDP = adenosylcob(III)alamin + GMP + H(+). It catalyses the reaction alpha-ribazole 5'-phosphate + adenosylcob(III)inamide-GDP = adenosylcob(III)alamin 5'-phosphate + GMP + H(+). It participates in cofactor biosynthesis; adenosylcobalamin biosynthesis; adenosylcobalamin from cob(II)yrinate a,c-diamide: step 7/7. In terms of biological role, joins adenosylcobinamide-GDP and alpha-ribazole to generate adenosylcobalamin (Ado-cobalamin). Also synthesizes adenosylcobalamin 5'-phosphate from adenosylcobinamide-GDP and alpha-ribazole 5'-phosphate. The sequence is that of Adenosylcobinamide-GDP ribazoletransferase from Brucella ovis (strain ATCC 25840 / 63/290 / NCTC 10512).